A 1019-amino-acid polypeptide reads, in one-letter code: UPF0182 protein Krad_1193 (1019 aa).

The next 7 membrane-spanning stretches (helical) occupy residues 19-39 (GAALPTVVILVAVVIAVVVGA), 61-81 (LWLQVLLFTLGALLLAAAVAV), 115-135 (RLVVVVLSAAAGLFGGSVAMS), 169-189 (WLAFLVSFLTAAVVLAGIAGL), 213-233 (VHLASLAAAFLLLRAAGYWLD), 264-284 (AILALIAVVVALLFVAAAVGT), and 291-311 (IGTGLLVVSAIAIGGIYPWAV). Disordered regions lie at residues 897 to 934 (GNSGAGAGDEGAPPPTAGTPAPTDGATGGPAPDPATGD) and 977 to 1019 (DAAS…TPTP). Over residues 977 to 1005 (DAASAAEARLERSGTSGPTSSSSPSASSA) the composition is skewed to low complexity. Residues 1006 to 1019 (PPVPGETPAATPTP) are compositionally biased toward pro residues.

Belongs to the UPF0182 family.

The protein resides in the cell membrane. In Kineococcus radiotolerans (strain ATCC BAA-149 / DSM 14245 / SRS30216), this protein is UPF0182 protein Krad_1193.